The chain runs to 353 residues: Photosystem II protein D1 (353 aa).

Thr2 is modified (N-acetylthreonine). Thr2 carries the post-translational modification Phosphothreonine. Helical transmembrane passes span Tyr29 to Ser46, His118 to Leu133, and Trp142 to Ala156. Residue His118 participates in chlorophyll a binding. Tyr126 contributes to the pheophytin a binding site. [CaMn4O5] cluster contacts are provided by Asp170 and Glu189. The chain crosses the membrane as a helical span at residues Phe197–Leu218. His198 contacts chlorophyll a. A quinone-binding positions include His215 and Ser264–Phe265. A Fe cation-binding site is contributed by His215. A Fe cation-binding site is contributed by His272. The chain crosses the membrane as a helical span at residues Phe274 to Leu288. [CaMn4O5] cluster contacts are provided by His332, Glu333, Asp342, and Ala344. Positions Ala345–Gly353 are excised as a propeptide.

Belongs to the reaction center PufL/M/PsbA/D family. As to quaternary structure, PSII is composed of 1 copy each of membrane proteins PsbA, PsbB, PsbC, PsbD, PsbE, PsbF, PsbH, PsbI, PsbJ, PsbK, PsbL, PsbM, PsbT, PsbX, PsbY, PsbZ, Psb30/Ycf12, at least 3 peripheral proteins of the oxygen-evolving complex and a large number of cofactors. It forms dimeric complexes. The cofactor is The D1/D2 heterodimer binds P680, chlorophylls that are the primary electron donor of PSII, and subsequent electron acceptors. It shares a non-heme iron and each subunit binds pheophytin, quinone, additional chlorophylls, carotenoids and lipids. D1 provides most of the ligands for the Mn4-Ca-O5 cluster of the oxygen-evolving complex (OEC). There is also a Cl(-1) ion associated with D1 and D2, which is required for oxygen evolution. The PSII complex binds additional chlorophylls, carotenoids and specific lipids.. Tyr-161 forms a radical intermediate that is referred to as redox-active TyrZ, YZ or Y-Z. In terms of processing, C-terminally processed by CTPA; processing is essential to allow assembly of the oxygen-evolving complex and thus photosynthetic growth.

The protein resides in the plastid. The protein localises to the chloroplast thylakoid membrane. It carries out the reaction 2 a plastoquinone + 4 hnu + 2 H2O = 2 a plastoquinol + O2. Functionally, photosystem II (PSII) is a light-driven water:plastoquinone oxidoreductase that uses light energy to abstract electrons from H(2)O, generating O(2) and a proton gradient subsequently used for ATP formation. It consists of a core antenna complex that captures photons, and an electron transfer chain that converts photonic excitation into a charge separation. The D1/D2 (PsbA/PsbD) reaction center heterodimer binds P680, the primary electron donor of PSII as well as several subsequent electron acceptors. The protein is Photosystem II protein D1 of Pinus koraiensis (Korean pine).